Here is an 872-residue protein sequence, read N- to C-terminus: Eukaryotic translation initiation factor 3 subunit C (872 aa).

The interval 1 to 100 (MSRFFRGGDD…KVKSAKDKRF (100 aa)) is disordered. 2 stretches are compositionally biased toward acidic residues: residues 16-59 (SSEE…DEEE) and 72-87 (SDDE…SDDE). The segment covering 88–100 (ATTKVKSAKDKRF) has biased composition (basic and acidic residues). A PCI domain is found at 613 to 787 (FHMHINLELL…ETVIFRKGVE (175 aa)). Residues 812 to 872 (TLEQKTQGSA…GGALGNAVRG (61 aa)) form a disordered region. Over residues 831–848 (GGGQRGGGQRGGRGGART) the composition is skewed to gly residues.

It belongs to the eIF-3 subunit C family. Component of the eukaryotic translation initiation factor 3 (eIF-3) complex.

It is found in the cytoplasm. In terms of biological role, component of the eukaryotic translation initiation factor 3 (eIF-3) complex, which is involved in protein synthesis of a specialized repertoire of mRNAs and, together with other initiation factors, stimulates binding of mRNA and methionyl-tRNAi to the 40S ribosome. The eIF-3 complex specifically targets and initiates translation of a subset of mRNAs involved in cell proliferation. The chain is Eukaryotic translation initiation factor 3 subunit C (nip-1) from Neurospora crassa (strain ATCC 24698 / 74-OR23-1A / CBS 708.71 / DSM 1257 / FGSC 987).